The sequence spans 406 residues: MSTFPAPVLGTPLSPTATRVMLLGAGELGKEVVIALQRLGVEVIAVDRYADAPGHQVAHRAHVVSMTDPQALRQVIEQERPHVVVPEIEAIATDLLVALEDEGAVRVTPTARAAHLTMNREGIRRLAAETLGLPTSPYRFVDTEQALREAIDGGIGYPCVIKPVMSSSGKGQSIIRSADDIAAAWRYAQEGGRVGAGRVIVEGFIEFDYEITLLTVRARGADGQIVTQFCEPIGHRQVDGDYVESWQPHPMSPAALQRSREIALAVTGDLGGLGIFGVELFVAGDQVWFSEVSPRPHDTGMVTLISQVQNEFELHARALLGLPVDTRLRQPGASSVIYGGVEARGVAFEGVAQALAEPGTDIRLFGKPESFAKRRMGVGLAVADDVDQARAKAARVSQAVRVRAGA.

N(1)-(5-phospho-beta-D-ribosyl)glycinamide is bound by residues Glu27 to Leu28 and Glu87. ATP-binding positions include Arg120, Lys162, Ser167 to Gln172, Glu202 to Ile205, and Glu210. Residues Arg125–Leu320 enclose the ATP-grasp domain. Mg(2+) is bound by residues Glu279 and Glu291. Residues Asp298, Lys367, and Arg374 to Arg375 each bind N(1)-(5-phospho-beta-D-ribosyl)glycinamide.

Belongs to the PurK/PurT family. Homodimer.

The catalysed reaction is N(1)-(5-phospho-beta-D-ribosyl)glycinamide + formate + ATP = N(2)-formyl-N(1)-(5-phospho-beta-D-ribosyl)glycinamide + ADP + phosphate + H(+). It participates in purine metabolism; IMP biosynthesis via de novo pathway; N(2)-formyl-N(1)-(5-phospho-D-ribosyl)glycinamide from N(1)-(5-phospho-D-ribosyl)glycinamide (formate route): step 1/1. Functionally, involved in the de novo purine biosynthesis. Catalyzes the transfer of formate to 5-phospho-ribosyl-glycinamide (GAR), producing 5-phospho-ribosyl-N-formylglycinamide (FGAR). Formate is provided by PurU via hydrolysis of 10-formyl-tetrahydrofolate. The protein is Formate-dependent phosphoribosylglycinamide formyltransferase of Bordetella bronchiseptica (strain ATCC BAA-588 / NCTC 13252 / RB50) (Alcaligenes bronchisepticus).